The primary structure comprises 375 residues: E3 ubiquitin-protein ligase RNF34 (375 aa).

The FYVE-type zinc finger occupies 56 to 107 (EGPNIVCKACGLSFSVFRKKHVCCDCKKDFCSVCSVLQENLRRCSTCHLLQE). Residues 115 to 134 (LMRLKVKDLRQYLILRNIPI) form the SAP 1 domain. Serine 169 carries the post-translational modification Phosphoserine. Positions 202-250 (RTLGSGALAQEPSEIASANTEDDEDDDDDDDDDDDDDEENLEDRTPGLT) are disordered. Over residues 221 to 242 (TEDDEDDDDDDDDDDDDDEENL) the composition is skewed to acidic residues. Residues serine 257 and serine 259 each carry the phosphoserine modification. Positions 267-281 (VEGMSVRQLKEILAR) constitute an SAP 2 domain. The segment at 328 to 363 (CRICMDAVIDCVLLECGHMVTCTKCGKRMSECPICR) adopts an RING-type zinc-finger fold.

As to quaternary structure, interacts with CASP8 and CASP10. Interacts with p53/TP53; involved in p53/TP53 ubiquitination. Interacts (via RING-type zinc finger) with MDM2; the interaction stabilizes MDM2. Interacts (via RING-type zinc finger) with PPARGC1A. Interacts with NOD1. In terms of processing, autoubiquitinated (in vitro). Proteolytically cleaved by caspases upon induction of apoptosis by TNF.

The protein resides in the cell membrane. The protein localises to the endomembrane system. It is found in the nucleus. It localises to the nucleus speckle. Its subcellular location is the cytoplasm. The protein resides in the cytosol. It catalyses the reaction S-ubiquitinyl-[E2 ubiquitin-conjugating enzyme]-L-cysteine + [acceptor protein]-L-lysine = [E2 ubiquitin-conjugating enzyme]-L-cysteine + N(6)-ubiquitinyl-[acceptor protein]-L-lysine.. It participates in protein modification; protein ubiquitination. Functionally, E3 ubiquitin-protein ligase that regulates several biological processes through the ubiquitin-mediated proteasomal degradation of various target proteins. Ubiquitinates the caspases CASP8 and CASP10, promoting their proteasomal degradation, to negatively regulate cell death downstream of death domain receptors in the extrinsic pathway of apoptosis. May mediate 'Lys-48'-linked polyubiquitination of RIPK1 and its subsequent proteasomal degradation thereby indirectly regulating the tumor necrosis factor-mediated signaling pathway. Negatively regulates p53/TP53 through its direct ubiquitination and targeting to proteasomal degradation. Indirectly, may also negatively regulate p53/TP53 through ubiquitination and degradation of SFN. Mediates PPARGC1A proteasomal degradation probably through ubiquitination thereby indirectly regulating the metabolism of brown fat cells. Possibly involved in innate immunity, through 'Lys-48'-linked polyubiquitination of NOD1 and its subsequent proteasomal degradation. The chain is E3 ubiquitin-protein ligase RNF34 (RNF34) from Bos taurus (Bovine).